We begin with the raw amino-acid sequence, 908 residues long: Mycobactin import ATP-binding/permease protein IrtA (908 aa).

The Cytoplasmic portion of the chain corresponds to 1–329 (MARGFQGVML…SRLLAPLKKP (329 aa)). An FAD-binding FR-type domain is found at 15-124 (ARDHQATVVD…MGSRGFSVPE (110 aa)). Positions 16 to 245 (RDHQATVVDK…AQAYWTEGRA (230 aa)) are siderophore interaction domain. Residues 70–73 (RAYT), 87–91 (DMVLH), 97–98 (AS), and 241–243 (TEG) each bind FAD. Residues 245 to 311 (AMGSSRGETS…GAAQPRTPVR (67 aa)) are disordered. Residues 253–309 (TSTPAKPAAKTAPAKAAAKPAAASGAGTPEHAAAPAAATTGAPQAAPAPGAAQPRTP) show a composition bias toward low complexity. The chain crosses the membrane as a helical span at residues 330 to 350 (LIVSGVLQALITLIELAPFVL). An ABC transmembrane type-1 domain is found at 331-613 (IVSGVLQALI…IGYGLSGIQT (283 aa)). At 351 to 371 (LVELARLLLGGAEAERLWTLG) the chain is on the periplasmic side. A helical membrane pass occupies residues 372–392 (LTAVSLIGLGAVLAAAMTLWL). At 393–444 (HRVDARFAHELRGRLLTKLSRLPLGWFTRRGSASTKQLVQDDTLALHYLITH) the chain is on the cytoplasmic side. Residues 445-465 (AIPDAVAAVVAPVAVLVYLFV) form a helical membrane-spanning segment. Over 466–469 (ADWR) the chain is Periplasmic. Residues 470–490 (VALVLFIPVLVYLVLMSVMTI) form a helical membrane-spanning segment. Residues 491-557 (QSGSKIAQAP…PFVGKKTLMD (67 aa)) lie on the Cytoplasmic side of the membrane. Residues 558–578 (LVTRPATFLWIILVAGVPLVV) traverse the membrane as a helical segment. Topologically, residues 579-586 (TGRMDPVN) are periplasmic. A helical membrane pass occupies residues 587 to 607 (LLPFLLLGTTFGARLLGIGYG). At 608–908 (LSGIQTGMLA…VSADAVEVGR (301 aa)) the chain is on the cytoplasmic side. In terms of domain architecture, ABC transporter spans 654-887 (VELDRVSFEY…GGRYRGLWDS (234 aa)). Residue 687–694 (GPSGSGKS) participates in ATP binding.

It belongs to the ABC transporter superfamily. Siderophore-Fe(3+) uptake transporter (SIUT) (TC 3.A.1.21) family. As to quaternary structure, forms a heterodimer with IrtB. Requires FAD as cofactor.

Its subcellular location is the cell inner membrane. The ATPase activity of IrtAB is stimulated more than 38-fold in the presence of Fe-MBT, and more than 10-fold in the presence of Fe-cMBT. In terms of biological role, part of the ABC transporter complex IrtAB involved in the import of iron-bound mycobactin (Fe-MBT) and carboxymycobactin (Fe-cMBT). Has a preference for Fe-MBT over Fe-cMBT. Mycobactins are then reduced by the siderophore interaction domain to facilitate iron release in the bacterial cell. Transmembrane domains (TMD) form a pore in the membrane and the ATP-binding domain (NBD) is responsible for energy generation. The protein is Mycobactin import ATP-binding/permease protein IrtA of Mycolicibacterium thermoresistibile (strain ATCC 19527 / DSM 44167 / CIP 105390 / JCM 6362 / NCTC 10409 / 316) (Mycobacterium thermoresistibile).